Reading from the N-terminus, the 517-residue chain is Transmembrane protein 180 (517 aa).

The Extracellular segment spans residues 1–11 (MRLGGPWAWLL). A helical transmembrane segment spans residues 12-43 (GLPTAVVYGSLALFVSVLHNVFLLYYVDTFVS). Residues 44–55 (VYKIDKAAFWVG) are Cytoplasmic-facing. The chain crosses the membrane as a helical span at residues 56 to 74 (ETVFLLWNSLNDPLFGWLS). Residues 75 to 100 (DRQFLSSQPRSGAGLSSRAVVLARVR) are Extracellular-facing. A helical membrane pass occupies residues 101–118 (ALGWHGPLLALSFLAFWV). Residues 119–126 (PWAPAGLQ) are Cytoplasmic-facing. The chain crosses the membrane as a helical span at residues 127-151 (FLLCLCLYDGFLTLVDLHHHALLAD). The Extracellular portion of the chain corresponds to 152 to 155 (LALS). A helical membrane pass occupies residues 156 to 179 (AHDRTHLNFYCSLFSAAGSLSVFA). The Cytoplasmic portion of the chain corresponds to 180 to 191 (SYAFWNKEDFSS). The chain crosses the membrane as a helical span at residues 192–223 (FRAFCLALATGSGLGFVGAARLLRRRVEAAGR). Residues 224–264 (EPGCPAMAVNDGLCEEELLVGGEEAGSITLGQYLQQLARHR) lie on the Extracellular side of the membrane. A helical transmembrane segment spans residues 265–292 (NFLWFVGMDLVQVFHCHFNSNFFPLFLE). Topologically, residues 293–305 (HLLSDHISLSTGS) are cytoplasmic. Residues 306 to 325 (FLLGISYVAPHLNNLYFLPL) form a helical membrane-spanning segment. The Extracellular portion of the chain corresponds to 326-330 (CRRWG). Residues 331-350 (VYAVVRGLFLLKLGLSLLML) traverse the membrane as a helical segment. Residues 351–358 (LAGPDHPG) are Cytoplasmic-facing. The helical transmembrane segment at 359 to 393 (LLCLFIASNRVFTEGTCKLLTLVVTDLVDEDLVLN) threads the bilayer. Over 394 to 402 (HRKQAASAL) the chain is Extracellular. The chain crosses the membrane as a helical span at residues 403–429 (LFGMVALVTKPGQTFAPLLGTWLLCFY). Residues 430-466 (TGHDLFQQHPPAPVGSAQPWPEPPAPPPAQAPPLRQG) are Cytoplasmic-facing. The helical transmembrane segment at 467-485 (CFYLLVLVPIACALLQLFT) threads the bilayer. Residues 486–517 (WSQFTLHGRRLHMVKAQRQSLSRAQTLDVKMV) are Extracellular-facing.

The protein resides in the cell membrane. The sequence is that of Transmembrane protein 180 from Bos taurus (Bovine).